The primary structure comprises 179 residues: NADH-quinone oxidoreductase subunit I (179 aa).

4Fe-4S ferredoxin-type domains follow at residues 49-79 and 89-118; these read LTRD…LQKG and EFFR…LTPD. [4Fe-4S] cluster-binding residues include Cys59, Cys62, Cys65, Cys69, Cys98, Cys101, Cys104, and Cys108.

It belongs to the complex I 23 kDa subunit family. NDH-1 is composed of 14 different subunits. Subunits NuoA, H, J, K, L, M, N constitute the membrane sector of the complex. Requires [4Fe-4S] cluster as cofactor.

It is found in the cell inner membrane. It catalyses the reaction a quinone + NADH + 5 H(+)(in) = a quinol + NAD(+) + 4 H(+)(out). NDH-1 shuttles electrons from NADH, via FMN and iron-sulfur (Fe-S) centers, to quinones in the respiratory chain. The immediate electron acceptor for the enzyme in this species is believed to be ubiquinone. Couples the redox reaction to proton translocation (for every two electrons transferred, four hydrogen ions are translocated across the cytoplasmic membrane), and thus conserves the redox energy in a proton gradient. This is NADH-quinone oxidoreductase subunit I from Chromohalobacter salexigens (strain ATCC BAA-138 / DSM 3043 / CIP 106854 / NCIMB 13768 / 1H11).